The chain runs to 342 residues: Anthranilate phosphoribosyltransferase (342 aa).

Residues glycine 83, 86-87 (GD), threonine 91, 93-96 (NIST), 111-119 (KHGNRGVSS), and serine 123 contribute to the 5-phospho-alpha-D-ribose 1-diphosphate site. Glycine 83 contributes to the anthranilate binding site. Serine 95 provides a ligand contact to Mg(2+). An anthranilate-binding site is contributed by asparagine 114. Arginine 169 contacts anthranilate. 2 residues coordinate Mg(2+): aspartate 228 and glutamate 229.

The protein belongs to the anthranilate phosphoribosyltransferase family. Homodimer. Requires Mg(2+) as cofactor.

The enzyme catalyses N-(5-phospho-beta-D-ribosyl)anthranilate + diphosphate = 5-phospho-alpha-D-ribose 1-diphosphate + anthranilate. It participates in amino-acid biosynthesis; L-tryptophan biosynthesis; L-tryptophan from chorismate: step 2/5. Catalyzes the transfer of the phosphoribosyl group of 5-phosphorylribose-1-pyrophosphate (PRPP) to anthranilate to yield N-(5'-phosphoribosyl)-anthranilate (PRA). The sequence is that of Anthranilate phosphoribosyltransferase from Paraburkholderia phymatum (strain DSM 17167 / CIP 108236 / LMG 21445 / STM815) (Burkholderia phymatum).